Here is a 463-residue protein sequence, read N- to C-terminus: Digalactosyldiacylglycerol synthase 2, chloroplastic (463 aa).

Positions 1–22 (MGKKQHIAIFTTASLPWLTGTA) are cleaved as a signal peptide.

This sequence belongs to the glycosyltransferase group 1 family. Glycosyltransferase 4 subfamily. High expression in nodules infected cells, and low in nodule and root vascular tissue.

Its subcellular location is the plastid. It localises to the chloroplast outer membrane. The protein localises to the plastid outer membrane. The catalysed reaction is a 1,2-diacyl-3-O-(beta-D-galactosyl)-sn-glycerol + UDP-alpha-D-galactose = a 1,2-diacyl-3-O-[alpha-D-galactosyl-(1-&gt;6)-beta-D-galactosyl]-sn-glycerol + UDP + H(+). Functionally, involved in the synthesis of diacylglycerol galactolipids that are specifically found in thylakoid and in nodule peribacteroid membranes. Specific for alpha-glycosidic linkages. This Lotus japonicus (Lotus corniculatus var. japonicus) protein is Digalactosyldiacylglycerol synthase 2, chloroplastic.